Here is a 163-residue protein sequence, read N- to C-terminus: Protein GOLVEN 3 (163 aa).

Positions 1–20 (MMRFTIIVIAFLLIIQSLEE) are cleaved as a signal peptide. A propeptide spanning residues 21 to 141 (EHILVYAHEG…MEKLARLLRD (121 aa)) is cleaved from the precursor. Tyr-143 carries the post-translational modification Sulfotyrosine. The segment at 144–163 (PIYSKPRRKPPVNNRAPDKF) is disordered. Pro-154 is modified (hydroxyproline). Positions 158–163 (RAPDKF) are excised as a propeptide.

It belongs to the RGF family. As to quaternary structure, binds to LRR receptor-like serine/threonine-protein kinases RGI1, RGI2 and RGI3 to trigger their dimerization with SERK proteins and subsequent signaling. As to expression, expressed in roots, specifically in the root apical meristem (RAM).

It is found in the secreted. Functionally, signaling peptide (root growth factor) required during root gravitropism in a PIN2-traffic dependent manner, thus influencing the formation of auxin gradients. Maintains the postembryonic root stem cell niche. The polypeptide is Protein GOLVEN 3 (Arabidopsis thaliana (Mouse-ear cress)).